Reading from the N-terminus, the 245-residue chain is 1-(5-phosphoribosyl)-5-[(5-phosphoribosylamino)methylideneamino] imidazole-4-carboxamide isomerase (245 aa).

The active-site Proton acceptor is Asp7. Asp129 serves as the catalytic Proton donor.

It belongs to the HisA/HisF family.

The protein localises to the cytoplasm. It carries out the reaction 1-(5-phospho-beta-D-ribosyl)-5-[(5-phospho-beta-D-ribosylamino)methylideneamino]imidazole-4-carboxamide = 5-[(5-phospho-1-deoxy-D-ribulos-1-ylimino)methylamino]-1-(5-phospho-beta-D-ribosyl)imidazole-4-carboxamide. The protein operates within amino-acid biosynthesis; L-histidine biosynthesis; L-histidine from 5-phospho-alpha-D-ribose 1-diphosphate: step 4/9. The polypeptide is 1-(5-phosphoribosyl)-5-[(5-phosphoribosylamino)methylideneamino] imidazole-4-carboxamide isomerase (Escherichia fergusonii (strain ATCC 35469 / DSM 13698 / CCUG 18766 / IAM 14443 / JCM 21226 / LMG 7866 / NBRC 102419 / NCTC 12128 / CDC 0568-73)).